The following is a 268-amino-acid chain: Cytochrome b-c1 complex subunit Rieske-3, mitochondrial (268 aa).

The N-terminal 56 residues, 1-56, are a transit peptide targeting the mitochondrion; the sequence is MLRIAGRKLSSSAATRSSSAFFTRNPFTFTDDSSSPARSPSPASLASQFLDQFRGF. Topologically, residues 57–105 are mitochondrial matrix; sequence SSNSVSPAHQTGLVSDLPATVAAIKNPSSKIVYDDSNHERYPPGDPSKR. Residues 106-128 form a helical membrane-spanning segment; that stretch reads AFAYFVLTGGRFVYASLVRLLIL. The Mitochondrial intermembrane segment spans residues 129-268; that stretch reads KFVLSMSASK…FMEENKLLIG (140 aa). The 89-residue stretch at 178-266 folds into the Rieske domain; sequence INLANSVDLG…YSFMEENKLL (89 aa). The [2Fe-2S] cluster site is built by Cys211, His213, Cys230, and His233. Cys216 and Cys232 are disulfide-bonded.

The protein belongs to the Rieske iron-sulfur protein family. In terms of assembly, component of the ubiquinol-cytochrome c oxidoreductase (cytochrome b-c1 complex, complex III, CIII), a multisubunit enzyme composed of 3 respiratory subunits cytochrome b, cytochrome c1 and Rieske protein, 2 core protein subunits, and several low-molecular weight protein subunits. The complex exists as an obligatory dimer and forms supercomplexes (SCs) in the inner mitochondrial membrane with cytochrome c oxidase (complex IV, CIV). The cofactor is [2Fe-2S] cluster. As to expression, high levels are seen in the flowers while a low level expression is seen in the roots, leaves and stems.

Its subcellular location is the mitochondrion inner membrane. It carries out the reaction a quinol + 2 Fe(III)-[cytochrome c](out) = a quinone + 2 Fe(II)-[cytochrome c](out) + 2 H(+)(out). In terms of biological role, component of the ubiquinol-cytochrome c oxidoreductase, a multisubunit transmembrane complex that is part of the mitochondrial electron transport chain which drives oxidative phosphorylation. The respiratory chain contains 3 multisubunit complexes succinate dehydrogenase (complex II, CII), ubiquinol-cytochrome c oxidoreductase (cytochrome b-c1 complex, complex III, CIII) and cytochrome c oxidase (complex IV, CIV), that cooperate to transfer electrons derived from NADH and succinate to molecular oxygen, creating an electrochemical gradient over the inner membrane that drives transmembrane transport and the ATP synthase. The cytochrome b-c1 complex catalyzes electron transfer from ubiquinol to cytochrome c, linking this redox reaction to translocation of protons across the mitochondrial inner membrane, with protons being carried across the membrane as hydrogens on the quinol. In the process called Q cycle, 2 protons are consumed from the matrix, 4 protons are released into the intermembrane space and 2 electrons are passed to cytochrome c. The Rieske protein is a catalytic core subunit containing a [2Fe-2S] iron-sulfur cluster. It cycles between 2 conformational states during catalysis to transfer electrons from the quinol bound in the Q(0) site in cytochrome b to cytochrome c1. In Nicotiana tabacum (Common tobacco), this protein is Cytochrome b-c1 complex subunit Rieske-3, mitochondrial.